Reading from the N-terminus, the 543-residue chain is MFSWLKKGGARGQRSEAIRTVTSSLKELYRTKLLPLEEHYRFGSFHSPALEDADFDGKPMVLVAGQYSTGKTSFIQYLLEQEVPGSRVGPEPTTDCFVAVMHGETEGTVPGNALVVDPEKPFRKLNPFGNTFLNRFMCAQLPNQVLESISIIDTPGILSGAKQRVSRGYDFPAVLRWFAERVDLIILLFDAHKLEISDEFSEAIGALRGHEDKIRVVLNKADMVETQQLMRVYGALMWALGKVVGTPEVLRVYIGSFWSQPLLVPDNRRLFELEEQDLFRDIQGLPRHAALRKLNDLVKRARLVRVHAYIISYLKKEMPSVFGKENKKKQLIFKLPVIFAKIQLEHHISPGDFPDCQKMQELLMAHDFTKFHSLKPKLLEALDEMLTHDIAKLMPLLRQEELESVEAGVQGGAFEGTRMGPFVERGPDEAIEDGEEGSEDDAEWVVTKDKSKYDEIFYNLAPADGKLSGSKAKTWMVGTKLPNSVLGRIWKLSDVDRDGMLDDEEFALASHLIEAKLEGHGLPTNLPRRLVPPSKRRQKGSAE.

Residues serine 3 and serine 44 each carry the phosphoserine modification. One can recognise a Dynamin-type G domain in the interval 55-286; that stretch reads FDGKPMVLVA…DLFRDIQGLP (232 aa). The G1 motif stretch occupies residues 65 to 72; the sequence is GQYSTGKT. 65 to 72 is an ATP binding site; it reads GQYSTGKT. Positions 91–92 are G2 motif; that stretch reads EP. A G3 motif region spans residues 153–156; that stretch reads DTPG. Positions 219–222 are G4 motif; sequence NKAD. Position 220 (lysine 220) interacts with ATP. Position 243 (valine 243) is a region of interest, G5 motif. Tryptophan 258 is a binding site for ATP. The tract at residues 320–340 is mediates membrane-binding; that stretch reads SVFGKENKKKQLIFKLPVIFA. Phosphoserine occurs at positions 438, 468, 470, 484, and 493. The 89-residue stretch at 449-537 folds into the EH domain; the sequence is DKSKYDEIFY…RRLVPPSKRR (89 aa). The EF-hand domain occupies 481–516; that stretch reads LPNSVLGRIWKLSDVDRDGMLDDEEFALASHLIEAK. Ca(2+) is bound by residues aspartate 494, aspartate 496, aspartate 498, methionine 500, and glutamate 505. The interval 521-543 is disordered; the sequence is GLPTNLPRRLVPPSKRRQKGSAE. Residues 534 to 543 show a composition bias toward basic residues; the sequence is SKRRQKGSAE.

It belongs to the TRAFAC class dynamin-like GTPase superfamily. Dynamin/Fzo/YdjA family. EHD subfamily. Homodimer and homooligomer. Interacts with EHD1. May also interact with EHD3 and EHD4. Interacts with MYOF. Interacts with EHBP1. Interacts with FER1L5 (via second C2 domain). Interacts with CAV1 in a cholesterol-dependent manner. Interacts (via EH domain) with PACSIN2 (via NPF motifs); this interaction probably stabilizes the caveolae.

Its subcellular location is the cell membrane. The protein resides in the membrane. It is found in the caveola. It localises to the endosome membrane. The protein localises to the cytoplasm. Its subcellular location is the cytosol. The very low intrinsic ATPase activity is increased upon interaction with liposomes. Functionally, ATP- and membrane-binding protein that controls membrane reorganization/tubulation upon ATP hydrolysis. Plays a role in membrane trafficking between the plasma membrane and endosomes. Important for the internalization of GLUT4. Required for fusion of myoblasts to skeletal muscle myotubes. Required for normal translocation of FER1L5 to the plasma membrane. Regulates the equilibrium between cell surface-associated and cell surface-dissociated caveolae by constraining caveolae at the cell membrane. In Rattus norvegicus (Rat), this protein is EH domain-containing protein 2.